The sequence spans 190 residues: Imidazoleglycerol-phosphate dehydratase (190 aa).

Belongs to the imidazoleglycerol-phosphate dehydratase family.

Its subcellular location is the cytoplasm. The catalysed reaction is D-erythro-1-(imidazol-4-yl)glycerol 3-phosphate = 3-(imidazol-4-yl)-2-oxopropyl phosphate + H2O. Its pathway is amino-acid biosynthesis; L-histidine biosynthesis; L-histidine from 5-phospho-alpha-D-ribose 1-diphosphate: step 6/9. The chain is Imidazoleglycerol-phosphate dehydratase from Campylobacter fetus subsp. fetus (strain 82-40).